The chain runs to 1040 residues: Multidrug resistance protein MdtB (1040 aa).

Helical transmembrane passes span 25-45 (LLMA…PVAA), 347-367 (LMLA…NIPA), 369-389 (IIPG…MVFL), 396-416 (LTLM…IVVI), 440-460 (IGFT…PLLF), 472-492 (FAVT…TLTP), 537-557 (WLTL…WIVI), 863-883 (LGST…VLGV), 888-908 (FIHP…ALLA), 910-930 (IIAG…LIGI), 968-988 (ILMT…STGV), and 998-1018 (IAMV…TPVI).

Belongs to the resistance-nodulation-cell division (RND) (TC 2.A.6) family. MdtB subfamily. Part of a tripartite efflux system composed of MdtA, MdtB and MdtC. MdtB forms a heteromultimer with MdtC.

It is found in the cell inner membrane. The protein is Multidrug resistance protein MdtB of Salmonella paratyphi A (strain ATCC 9150 / SARB42).